The primary structure comprises 294 residues: Universal stress protein MSMEG_3950/MSMEI_3859 (294 aa).

Residue glycine 13 coordinates ATP. Residue lysine 109 forms an Isoglutamyl lysine isopeptide (Lys-Gln) (interchain with Q-Cter in protein Pup) linkage. ATP contacts are provided by residues 117 to 123, 131 to 132, glycine 164, aspartate 197, 261 to 267, and 275 to 277; these read GNRGMGA, ST, GSHGRGG, and SVS.

This sequence belongs to the universal stress protein A family.

This is Universal stress protein MSMEG_3950/MSMEI_3859 from Mycolicibacterium smegmatis (strain ATCC 700084 / mc(2)155) (Mycobacterium smegmatis).